We begin with the raw amino-acid sequence, 190 residues long: Imidazoleglycerol-phosphate dehydratase (190 aa).

The protein belongs to the imidazoleglycerol-phosphate dehydratase family.

The protein localises to the cytoplasm. It carries out the reaction D-erythro-1-(imidazol-4-yl)glycerol 3-phosphate = 3-(imidazol-4-yl)-2-oxopropyl phosphate + H2O. It functions in the pathway amino-acid biosynthesis; L-histidine biosynthesis; L-histidine from 5-phospho-alpha-D-ribose 1-diphosphate: step 6/9. The sequence is that of Imidazoleglycerol-phosphate dehydratase from Campylobacter hominis (strain ATCC BAA-381 / DSM 21671 / CCUG 45161 / LMG 19568 / NCTC 13146 / CH001A).